We begin with the raw amino-acid sequence, 383 residues long: Chaperone protein DnaJ (383 aa).

The J domain occupies 5–70 (DYYEVLGVAK…EKRAAYDRFG (66 aa)). The CR-type zinc finger occupies 139-217 (GKTETIRIPT…CSGAGRVNRE (79 aa)). Positions 152, 155, 169, 172, 191, 194, 205, and 208 each coordinate Zn(2+). CXXCXGXG motif repeat units follow at residues 152–159 (CEACSGTG), 169–176 (CSTCGGYG), 191–198 (CPNCHGRG), and 205–212 (CTACSGAG).

This sequence belongs to the DnaJ family. In terms of assembly, homodimer. It depends on Zn(2+) as a cofactor.

Its subcellular location is the cytoplasm. Participates actively in the response to hyperosmotic and heat shock by preventing the aggregation of stress-denatured proteins and by disaggregating proteins, also in an autonomous, DnaK-independent fashion. Unfolded proteins bind initially to DnaJ; upon interaction with the DnaJ-bound protein, DnaK hydrolyzes its bound ATP, resulting in the formation of a stable complex. GrpE releases ADP from DnaK; ATP binding to DnaK triggers the release of the substrate protein, thus completing the reaction cycle. Several rounds of ATP-dependent interactions between DnaJ, DnaK and GrpE are required for fully efficient folding. Also involved, together with DnaK and GrpE, in the DNA replication of plasmids through activation of initiation proteins. The polypeptide is Chaperone protein DnaJ (Methylorubrum populi (strain ATCC BAA-705 / NCIMB 13946 / BJ001) (Methylobacterium populi)).